We begin with the raw amino-acid sequence, 464 residues long: ATP synthase subunit beta 2 (464 aa).

147–154 (GGAGVGKT) is a binding site for ATP.

The protein belongs to the ATPase alpha/beta chains family. In terms of assembly, F-type ATPases have 2 components, CF(1) - the catalytic core - and CF(0) - the membrane proton channel. CF(1) has five subunits: alpha(3), beta(3), gamma(1), delta(1), epsilon(1). CF(0) has four main subunits: a(1), b(1), b'(1) and c(9-12).

It is found in the cell inner membrane. The catalysed reaction is ATP + H2O + 4 H(+)(in) = ADP + phosphate + 5 H(+)(out). Its function is as follows. Produces ATP from ADP in the presence of a proton gradient across the membrane. The catalytic sites are hosted primarily by the beta subunits. This chain is ATP synthase subunit beta 2, found in Cereibacter sphaeroides (strain ATCC 17029 / ATH 2.4.9) (Rhodobacter sphaeroides).